The primary structure comprises 186 residues: Putative glutathione-dependent formaldehyde-activating enzyme (186 aa).

A CENP-V/GFA domain is found at 20–166; it reads FSGGKLRCKC…FKSIGLETYD (147 aa). Zn(2+) contacts are provided by C27, C29, C48, C50, C53, C95, and C98.

Belongs to the Gfa family. Zn(2+) is required as a cofactor.

The enzyme catalyses S-(hydroxymethyl)glutathione = glutathione + formaldehyde. It participates in one-carbon metabolism; formaldehyde degradation; formate from formaldehyde (glutathione route): step 1/3. Functionally, catalyzes the condensation of formaldehyde and glutathione to S-hydroxymethylglutathione. This is Putative glutathione-dependent formaldehyde-activating enzyme from Fusarium vanettenii (strain ATCC MYA-4622 / CBS 123669 / FGSC 9596 / NRRL 45880 / 77-13-4) (Fusarium solani subsp. pisi).